An 812-amino-acid chain; its full sequence is Lon protease (812 aa).

Residues 12–205 (LPMLPLRGVL…YLCELLAKEM (194 aa)) enclose the Lon N-terminal domain. 357–364 (GPPGVGKT) is an ATP binding site. The region spanning 593-774 (ENQVGVATGL…DEVLEETLLK (182 aa)) is the Lon proteolytic domain. Residues Ser-680 and Lys-723 contribute to the active site.

It belongs to the peptidase S16 family. In terms of assembly, homohexamer. Organized in a ring with a central cavity.

The protein resides in the cytoplasm. The catalysed reaction is Hydrolysis of proteins in presence of ATP.. ATP-dependent serine protease that mediates the selective degradation of mutant and abnormal proteins as well as certain short-lived regulatory proteins. Required for cellular homeostasis and for survival from DNA damage and developmental changes induced by stress. Degrades polypeptides processively to yield small peptide fragments that are 5 to 10 amino acids long. Binds to DNA in a double-stranded, site-specific manner. This is Lon protease from Syntrophomonas wolfei subsp. wolfei (strain DSM 2245B / Goettingen).